Reading from the N-terminus, the 489-residue chain is Cytochrome P450 monooxygenase AMT3 (489 aa).

Residues 292-312 traverse the membrane as a helical segment; the sequence is LFMVAGTETTITALSGLVFLL. C436 contacts heme.

This sequence belongs to the cytochrome P450 family. It depends on heme as a cofactor.

The protein resides in the membrane. The protein operates within mycotoxin biosynthesis. Functionally, cytochrome P450 monooxygenase; part of the gene clusters that mediate the biosynthesis of AM-toxins, host-selective toxins (HSTs) causing Alternaria blotch on apple, a worldwide distributed disease. AM-toxins are cyclic depsipeptides containing the 3 residues 2-hydroxy-isovaleric acid (2-HIV), dehydroalanine, L-alanine which are common for all 3 AM-toxins I to III. The fourth precursor is L-alpha-amino-methoxyphenyl-valeric acid (L-Amv) for AM-toxin I, L-alpha-amino-phenyl-valeric acid (L-Apv) for AM-toxin II, and L-alpha-amino-hydroxyphenyl-valeric acid (L-Ahv) for AM-toxin III. AM-toxins have two target sites for affecting susceptible apple cells; they cause invagination of the plasma membrane and electrolyte loss and chloroplast disorganization. The non-ribosomal peptide synthetase AMT1 contains 4 catalytic modules and is responsible for activation of each residue in AM-toxin. The aldo-keto reductase AMT2 catalyzes the conversion of 2-keto-isovaleric acid (2-KIV) to 2-hydroxy-isovaleric acid (2-HIV), one of the precursor residues incorporated by AMT1 during AM-toxin biosynthesis, by reduction of its ketone to an alcohol. The cytochrome P450 monooxygenase AMT3 and the thioesterase AMT4 are also important for AM-toxin production, but their exact function within the AM-toxin biosynthesis are not known yet. Up to 21 proteins (including AMT1 to AMT4) are predicted to be involved in AM-toxin biosynthesis since their expression ishighly up-regulated in AM-toxin-producing cultures. This chain is Cytochrome P450 monooxygenase AMT3, found in Alternaria alternata (Alternaria rot fungus).